The following is a 538-amino-acid chain: Cryptic outer membrane porin BglH (538 aa).

A signal peptide spans Met1–Ala25. The disordered stretch occupies residues Lys52 to Thr82. Over residues Ala62–Gln73 the composition is skewed to polar residues.

The protein belongs to the porin LamB (TC 1.B.3) family. Homomonomer; no physical evidence of a homotrimer has been found, however conductance experiments suggest it may be a homotrimer. The monomer probably consists of 18 antiparallel beta-strands.

The protein resides in the cell outer membrane. In terms of biological role, part of a cryptic operon that is poorly expressed in vivo. May be an ancestral sugar porin with a broad carbohydrate specificity; it binds aromatic beta-D-glucosides such as arbutin and salicin, but with low affinity compared to the binding of maltooligosaccharides to the LamB porin. This is Cryptic outer membrane porin BglH (bglH) from Escherichia coli (strain K12).